The primary structure comprises 292 residues: Homoserine kinase (292 aa).

ATP is bound at residue 84–94 (PLARGMGSSSA).

This sequence belongs to the GHMP kinase family. Homoserine kinase subfamily.

The protein localises to the cytoplasm. It catalyses the reaction L-homoserine + ATP = O-phospho-L-homoserine + ADP + H(+). It functions in the pathway amino-acid biosynthesis; L-threonine biosynthesis; L-threonine from L-aspartate: step 4/5. Its function is as follows. Catalyzes the ATP-dependent phosphorylation of L-homoserine to L-homoserine phosphate. The polypeptide is Homoserine kinase (Campylobacter lari (strain RM2100 / D67 / ATCC BAA-1060)).